The primary structure comprises 235 residues: Futalosine hydrolase (235 aa).

This sequence belongs to the PNP/UDP phosphorylase family. Futalosine hydrolase subfamily.

The catalysed reaction is futalosine + H2O = dehypoxanthine futalosine + hypoxanthine. Its pathway is quinol/quinone metabolism; menaquinone biosynthesis. Catalyzes the hydrolysis of futalosine (FL) to dehypoxanthine futalosine (DHFL) and hypoxanthine, a step in the biosynthesis of menaquinone (MK, vitamin K2). Does not accept aminodeoxyfutalosine (AFL) as a substrate. This is Futalosine hydrolase from Streptomyces coelicolor (strain ATCC BAA-471 / A3(2) / M145).